The chain runs to 555 residues: F-box only protein 33 (555 aa).

One can recognise an F-box domain in the interval 65–111 (AAGAASLPSELIVHIFSFLPAPDRLRASASCSHWRECLFYPALWPQL).

In terms of assembly, part of the SCF (SKP1-CUL1-F-box) E3 ubiquitin-protein ligase complex SCF(FBXO33) formed of CUL1, SKP1, RBX1 and FBXO33. Interacts via its N-terminus with YBX1 CSD domain. Directly interacts with SKP1 and CUL1.

It functions in the pathway protein modification; protein ubiquitination. In terms of biological role, substrate recognition component of a SCF (SKP1-CUL1-F-box protein) E3 ubiquitin-protein ligase complex which mediates the ubiquitination and subsequent proteasomal degradation of target proteins. Probably recognizes and binds to phosphorylated target proteins. Recognizes YBX1. This is F-box only protein 33 (FBXO33) from Homo sapiens (Human).